The sequence spans 356 residues: Syntaxin-7A (356 aa).

Topologically, residues 1-333 (MYNNNNNFGG…NQKSSRNKMC (333 aa)) are cytoplasmic. Composition is skewed to low complexity over residues 32-74 (NNNN…FDNN) and 207-224 (NNNS…NNQQ). 2 disordered regions span residues 32–88 (NNNN…NSDY) and 187–247 (EKTT…RRQQ). Residues 233–244 (EDEHQSLMESSR) are compositionally biased toward basic and acidic residues. One can recognise a t-SNARE coiled-coil homology domain in the interval 259–321 (NSIIQERDEG…KEGVNHLREA (63 aa)). A helical; Anchor for type IV membrane protein membrane pass occupies residues 334–354 (WIVLILLIVCAVLGVILFFTL). The Vesicular segment spans residues 355–356 (RK).

Belongs to the syntaxin family. In terms of assembly, component of the SNARE complex composed of syn7A, syn8A, vamp7A and vti1A. Interacts with nsfA, snpA and snpC.

The protein localises to the endosome membrane. Involved in the targeting and/or fusion of transport vesicles to their target membrane during transport of proteins from the early endosome to the lysosome. Required for fusion of late endosomes with lysosomes and homotypic lysosomal fusion. May be involved in protein trafficking from the plasma membrane to the early endosome (EE) as well as in homotypic fusion of endocytic organelles. The chain is Syntaxin-7A from Dictyostelium discoideum (Social amoeba).